Reading from the N-terminus, the 137-residue chain is Integration host factor subunit beta (137 aa).

A compositionally biased stretch (basic and acidic residues) spans 75–92 (KRVPHFKAGKELRERVDR). A disordered region spans residues 75–137 (KRVPHFKAGK…EGGGLNLARS (63 aa)). Residues 128–137 (EGGGLNLARS) are compositionally biased toward gly residues.

It belongs to the bacterial histone-like protein family. Heterodimer of an alpha and a beta chain.

Its function is as follows. This protein is one of the two subunits of integration host factor, a specific DNA-binding protein that functions in genetic recombination as well as in transcriptional and translational control. In Cupriavidus pinatubonensis (strain JMP 134 / LMG 1197) (Cupriavidus necator (strain JMP 134)), this protein is Integration host factor subunit beta.